Consider the following 478-residue polypeptide: MPVLYEQDKHVSSAILTGQERGVLRCQERTSLLHHWKLTKEQIALVEKAGFGWFRLVGSISLNNSLISALVERWRRETNTFHFPCGEMTITLDEVSLILGLAVDGKPVVGVKEKDEDPSQVCLRLLGKLPKGELSGNRVTAKWLKESFAECPKGATMKEIEYHTRAYLIYIVGSTIFATTDPSKISVDYLILFEDFEKAGEYAWGAAALAFLYRQIGNASQRSQSIIGGCLTLLQCWSYFHLNIDRPKRTTRQFPLALLWKGRQQSRSKNDLFKYRKALDDLDPSNVSWCPFEGDLDIVPQSFKDNLLLGRSRTKLIGPKVVEWHFPDRCMKQFGLCQVIPGEVPPRKNEKNHDEDLLEDMNTADEEWMRRRENIVENGGGNGDESEYMQWFNSITVPKLHRDTSLEADIMNVQAAILQFDEVASTLSLEDLHPEEREAIEEAVMSMSNALRVGDWYEASTTNKRKRREEQQQTDWSE.

A disordered region spans residues 459 to 478 (ASTTNKRKRREEQQQTDWSE). The Nuclear localization signal signature appears at 464-468 (KRKRR).

Expressed in root meristem, root vasculature, shoot apical meristem (SAM), leaf vasculature and ovules.

The protein localises to the nucleus. Its function is as follows. Required for the organization of the root apical meristem (RAM) and the shoot apical meristem (SAM). Required to maintain genome stability and cell division activity in meristematic cells. This Arabidopsis thaliana (Mouse-ear cress) protein is Protein MAINTENANCE OF MERISTEMS.